A 222-amino-acid polypeptide reads, in one-letter code: Putative metal transport protein MJ1569 (222 aa).

6 consecutive transmembrane segments (helical) span residues 3–23 (IPDG…MIPI), 39–59 (LPLL…NLPV), 81–101 (WVAT…FGDG), 102–122 (GITC…FVGY), 135–155 (VIAS…VAGF), and 180–200 (AFAH…IVVW).

Belongs to the CbiM family.

Its subcellular location is the cell membrane. Functionally, may be involved in metal transport. This is Putative metal transport protein MJ1569 from Methanocaldococcus jannaschii (strain ATCC 43067 / DSM 2661 / JAL-1 / JCM 10045 / NBRC 100440) (Methanococcus jannaschii).